A 58-amino-acid polypeptide reads, in one-letter code: Preprotein translocase subunit SecG (58 aa).

Topologically, residues 1–33 (MARRKKYEGLNPFVAAGLIKFSEEGEMERIKLS) are cytoplasmic. A helical transmembrane segment spans residues 34–55 (PKAAIAVSAAIIAALIIINLLL). The Extracellular segment spans residues 56–58 (PPL).

This sequence belongs to the SEC61-beta family. Component of the protein translocase complex. Heterotrimer consisting of alpha (SecY), beta (SecG) and gamma (SecE) subunits. Can form oligomers of the heterotrimer.

The protein resides in the cell membrane. In terms of biological role, involved in protein export. The function of the beta subunit is unknown, but it may be involved in stabilization of the trimeric complex. This Pyrobaculum arsenaticum (strain DSM 13514 / JCM 11321 / PZ6) protein is Preprotein translocase subunit SecG.